The primary structure comprises 58 residues: Large ribosomal subunit protein eL20 (58 aa).

The interval 37 to 58 is disordered; the sequence is TTVGSQHNRKRPQIEIKEVSAA. A compositionally biased stretch (basic and acidic residues) spans 48–58; it reads PQIEIKEVSAA.

Belongs to the eukaryotic ribosomal protein eL20 family. Part of the 50S ribosomal subunit. Binds 23S rRNA.

In Halorubrum lacusprofundi (strain ATCC 49239 / DSM 5036 / JCM 8891 / ACAM 34), this protein is Large ribosomal subunit protein eL20.